Consider the following 383-residue polypeptide: Cytochrome b (383 aa).

4 helical membrane passes run F32 to M52, W76 to A98, T113 to V133, and F179 to I199. Positions 82 and 96 each coordinate heme b. Residues H183 and H197 each contribute to the heme b site. H202 is a binding site for a ubiquinone. 4 helical membrane-spanning segments follow: residues F225–C245, L289–D309, L321–A341, and Y348–P368.

It belongs to the cytochrome b family. In terms of assembly, fungal cytochrome b-c1 complex contains 10 subunits; 3 respiratory subunits, 2 core proteins and 5 low-molecular weight proteins. Cytochrome b-c1 complex is a homodimer. The cofactor is heme b.

It is found in the mitochondrion inner membrane. Component of the ubiquinol-cytochrome c reductase complex (complex III or cytochrome b-c1 complex) that is part of the mitochondrial respiratory chain. The b-c1 complex mediates electron transfer from ubiquinol to cytochrome c. Contributes to the generation of a proton gradient across the mitochondrial membrane that is then used for ATP synthesis. This is Cytochrome b (cob) from Schizophyllum commune (Split gill fungus).